An 88-amino-acid chain; its full sequence is Putative cancer susceptibility gene HEPN1 protein (88 aa).

In terms of tissue distribution, expressed in liver. Expression is either down-regulated or lost in hepatocellular carcinomas (HCC).

The protein localises to the cytoplasm. The sequence is that of Putative cancer susceptibility gene HEPN1 protein (HEPN1) from Homo sapiens (Human).